A 206-amino-acid chain; its full sequence is RILP-like protein 2 (206 aa).

Positions methionine 1–leucine 29 are disordered. Positions glutamate 8–glycine 19 are enriched in acidic residues. In terms of domain architecture, RH1 spans glycine 19–glutamate 108. The stretch at leucine 67 to serine 159 forms a coiled coil. An RH2 domain is found at arginine 125–leucine 197. Residues leucine 161–glutamate 189 are disordered. Residues proline 168–leucine 177 are compositionally biased toward basic and acidic residues.

This sequence belongs to the RILPL family. In terms of assembly, homodimer. Interacts with RAC1. Interacts (via N-terminus) with MYO5A, the interaction is required for its role in dendrite formation. Interacts with RAB8A; interaction is dependent on the phosphorylation of RAB8A on 'Thr-72'. Interacts with RAB10 and RAB12; interaction is dependent on the phosphorylation of 'Thr-73' on RAB10 and 'Ser-105' on RAB12.

Its subcellular location is the cytoplasm. The protein resides in the cytosol. It is found in the cytoskeleton. It localises to the microtubule organizing center. The protein localises to the centrosome. Its subcellular location is the cell projection. The protein resides in the cilium. Involved in cell shape and neuronal morphogenesis, positively regulating the establishment and maintenance of dendritic spines. Plays a role in cellular protein transport, including protein transport away from primary cilia. May function via activation of RAC1 and PAK1. This Bos taurus (Bovine) protein is RILP-like protein 2 (RILPL2).